Reading from the N-terminus, the 360-residue chain is Phospho-N-acetylmuramoyl-pentapeptide-transferase (360 aa).

10 helical membrane passes run 26 to 46 (AILG…KMIA), 73 to 93 (TMGG…WGDL), 97 to 117 (YVWV…IDDY), 132 to 152 (WKYL…YASA), 168 to 188 (VMPQ…VGSS), 199 to 219 (GLAI…AYLS), 236 to 256 (AGEL…FLWF), 263 to 283 (VFMG…IAVL), 288 to 308 (ILLV…ILQV), and 338 to 358 (VIVR…ATLK).

Belongs to the glycosyltransferase 4 family. MraY subfamily. It depends on Mg(2+) as a cofactor.

The protein localises to the cell inner membrane. The catalysed reaction is UDP-N-acetyl-alpha-D-muramoyl-L-alanyl-gamma-D-glutamyl-meso-2,6-diaminopimeloyl-D-alanyl-D-alanine + di-trans,octa-cis-undecaprenyl phosphate = di-trans,octa-cis-undecaprenyl diphospho-N-acetyl-alpha-D-muramoyl-L-alanyl-D-glutamyl-meso-2,6-diaminopimeloyl-D-alanyl-D-alanine + UMP. The protein operates within cell wall biogenesis; peptidoglycan biosynthesis. Catalyzes the initial step of the lipid cycle reactions in the biosynthesis of the cell wall peptidoglycan: transfers peptidoglycan precursor phospho-MurNAc-pentapeptide from UDP-MurNAc-pentapeptide onto the lipid carrier undecaprenyl phosphate, yielding undecaprenyl-pyrophosphoryl-MurNAc-pentapeptide, known as lipid I. This chain is Phospho-N-acetylmuramoyl-pentapeptide-transferase, found in Shewanella halifaxensis (strain HAW-EB4).